The primary structure comprises 313 residues: Ribosomal protein L11 methyltransferase (313 aa).

S-adenosyl-L-methionine contacts are provided by Thr-164, Gly-185, Asp-207, and Asn-249.

It belongs to the methyltransferase superfamily. PrmA family.

Its subcellular location is the cytoplasm. It catalyses the reaction L-lysyl-[protein] + 3 S-adenosyl-L-methionine = N(6),N(6),N(6)-trimethyl-L-lysyl-[protein] + 3 S-adenosyl-L-homocysteine + 3 H(+). Its function is as follows. Methylates ribosomal protein L11. This chain is Ribosomal protein L11 methyltransferase, found in Clostridium perfringens (strain 13 / Type A).